The sequence spans 348 residues: UDP-3-O-acylglucosamine N-acyltransferase (348 aa).

The Proton acceptor role is filled by H241.

The protein belongs to the transferase hexapeptide repeat family. LpxD subfamily. Homotrimer.

The enzyme catalyses a UDP-3-O-[(3R)-3-hydroxyacyl]-alpha-D-glucosamine + a (3R)-hydroxyacyl-[ACP] = a UDP-2-N,3-O-bis[(3R)-3-hydroxyacyl]-alpha-D-glucosamine + holo-[ACP] + H(+). The protein operates within bacterial outer membrane biogenesis; LPS lipid A biosynthesis. Catalyzes the N-acylation of UDP-3-O-acylglucosamine using 3-hydroxyacyl-ACP as the acyl donor. Is involved in the biosynthesis of lipid A, a phosphorylated glycolipid that anchors the lipopolysaccharide to the outer membrane of the cell. This chain is UDP-3-O-acylglucosamine N-acyltransferase, found in Neisseria meningitidis serogroup C / serotype 2a (strain ATCC 700532 / DSM 15464 / FAM18).